Here is an 837-residue protein sequence, read N- to C-terminus: MTQVTVKELAQVVDTPVERLLQQMREAGLSHTSAEQVVTDNEKQALLAHLKSSHGAKVDEPRKITLQRKTTTKLKVGGSKTISVEVRKKKTFVKRSAEEIEAEQRRELEEQRAAEEAARLKAEQEARERAEEEARRQAEAAKAQTAETAAPAAAESASSAEPAQVVAAVEAAAPAPERKKEEPRRVEKPRSDDDERRDRKHAQHRPSLKTKAPLARTVRSGEDEADGFRRGGRGGKSKLKKRNQHGFQSPTGPVVREVSIGETITVAELAQQMSVKAAEVIKFMFKMGSPVTINQVLDQETAQLVAEELGHKVKLVSDNALEEQLAELLKFEGESVARAPVVTVMGHVDHGKTSLLDYIRRAKVAVGEAGGITQHIGAYHVETERGMVTFLDTPGHAAFTAMRARGAKATDIVILVVAADDGVMPQTQEAVQHAKAAGVPIVVAVNKIDKPEANPDNIKNGLAALDVIPEEWGGDTPFIPVSAKVGTGVDELLEAVLLQAEILELKATPSAPGRGVVVESRLDKGRGPVATVLVQDGTLRQGDMVLCGVNFGRVRAMLDENGKPVKEAGPAIPVEILGLDGTPEAGDDLTVVADEKKAREVALFRQGKFREVKLARAHAGKLENIFETMGQDEKKTLNIVLKADVRGSLEALQGSLNGLGNDEVQVRVVGGGVGGITESDANLALASNAVLFGFNVRADAGARKIVEAEGLDMRYYNVIYDIIEDVKKALTGMLGSDVRENILGIAEVRDVFRSPKFGAIAGCMVTEGMVHRNRPIRVLRDDVVIFEGELESLRRFKDDVAEVRAGMECGIGVKSYNDVKVGDKIEVFEKVEVARSL.

The segment covering 97–139 (AEEIEAEQRRELEEQRAAEEAARLKAEQEARERAEEEARRQAE) has biased composition (basic and acidic residues). The segment at 97–253 (AEEIEAEQRR…QHGFQSPTGP (157 aa)) is disordered. Residues 140-175 (AAKAQTAETAAPAAAESASSAEPAQVVAAVEAAAPA) show a composition bias toward low complexity. Basic and acidic residues predominate over residues 176-197 (PERKKEEPRRVEKPRSDDDERR). Over residues 198 to 208 (DRKHAQHRPSL) the composition is skewed to basic residues. Residues 219 to 229 (RSGEDEADGFR) show a composition bias toward basic and acidic residues. Basic residues predominate over residues 230–244 (RGGRGGKSKLKKRNQ). One can recognise a tr-type G domain in the interval 337-504 (ARAPVVTVMG…AVLLQAEILE (168 aa)). The G1 stretch occupies residues 346–353 (GHVDHGKT). 346–353 (GHVDHGKT) is a GTP binding site. Residues 371–375 (GITQH) form a G2 region. A G3 region spans residues 392-395 (DTPG). GTP contacts are provided by residues 392 to 396 (DTPGH) and 446 to 449 (NKID). The segment at 446–449 (NKID) is G4. A G5 region spans residues 482–484 (SAK).

Belongs to the TRAFAC class translation factor GTPase superfamily. Classic translation factor GTPase family. IF-2 subfamily.

The protein localises to the cytoplasm. Functionally, one of the essential components for the initiation of protein synthesis. Protects formylmethionyl-tRNA from spontaneous hydrolysis and promotes its binding to the 30S ribosomal subunits. Also involved in the hydrolysis of GTP during the formation of the 70S ribosomal complex. The chain is Translation initiation factor IF-2 from Stutzerimonas stutzeri (strain A1501) (Pseudomonas stutzeri).